The following is a 1997-amino-acid chain: Nucleoprotein TPR (1997 aa).

Coiled-coil stretches lie at residues 1-36 (QEQH…NDLL), 101-277 (EIVK…HQMT), 335-1103 (DSTE…IKTI), and 1129-1305 (AEAS…EPQE). Basic and acidic residues-rich tracts occupy residues 672-702 (SSEY…KTVE) and 1290-1305 (REQQ…EPQE). Disordered regions lie at residues 672–706 (SSEY…QMEQ), 1290–1352 (REQQ…AAVP), 1438–1529 (AFVQ…KTET), 1561–1752 (IQTS…RRQS), 1795–1832 (AIHS…ASQG), and 1870–1997 (ENPA…RSNI). Composition is skewed to polar residues over residues 1306-1321 (TTRI…QPTT), 1328-1347 (SANT…SKVT), and 1446-1487 (SHAT…SSSI). A compositionally biased stretch (basic and acidic residues) spans 1511-1529 (DQQRTKKRKEEDIEEKTET). Positions 1561–1587 (IQTSQVIESQAPEQLQNVQSTQDSLQD) are enriched in polar residues. Acidic residues-rich tracts occupy residues 1601 to 1637 (SDEE…DSNE) and 1644 to 1667 (GNED…ETED). Composition is skewed to polar residues over residues 1692-1709 (AEST…SASD), 1817-1830 (QASS…QLAS), and 1879-1899 (HASQ…TSVD). Residues 1902 to 1915 (AADEGDEVFVEAES) show a composition bias toward acidic residues. The segment covering 1950 to 1959 (SSSIADTSSS) has biased composition (low complexity).

Belongs to the TPR family. As to quaternary structure, homodimer. Part of the nuclear pore complex (NPC). Interacts with nuclear receptor KPNB1; the interaction occurs in a RanGTP-dependent manner. Associates with the Importin alpha/Importin beta receptor. Expressed in epithelial cells, oocytes and egg (at protein level).

The protein resides in the nucleus. It is found in the nucleus membrane. Its subcellular location is the nucleus envelope. The protein localises to the nuclear pore complex. It localises to the cytoplasm. The protein resides in the cytoskeleton. It is found in the spindle. Its subcellular location is the chromosome. The protein localises to the centromere. It localises to the kinetochore. Its function is as follows. Component of the nuclear pore complex (NPC), a complex required for the trafficking across the nuclear envelope. Functions as a scaffolding element in the nuclear phase of the NPC essential for normal nucleocytoplasmic transport of proteins and mRNAs, plays a role in the establishment of nuclear-peripheral chromatin compartmentalization in interphase, and in the mitotic spindle checkpoint signaling during mitosis. Involved in the quality control and retention of unspliced mRNAs in the nucleus. Implicated in nuclear export of mRNAs transcribed from heat shock gene promoters. May play a limited role in the regulation of nuclear protein export. May be involved in the formation and/or maintenance of NPC-associated perinuclear heterochromatin exclusion zones (HEZs). Finally, may act as a spatial regulator of the spindle-assembly checkpoint (SAC) response. The polypeptide is Nucleoprotein TPR (Xenopus laevis (African clawed frog)).